The sequence spans 84 residues: U4-theraphotoxin-Hhn1b (84 aa).

A signal peptide spans 1–22 (MKVTLIAILTCAAVLVLHTTAA). Positions 23–47 (EELEESQLMEVGMPDTELAAVDEER) are excised as a propeptide. Cystine bridges form between cysteine 51–cysteine 65, cysteine 55–cysteine 76, and cysteine 70–cysteine 81.

Belongs to the neurotoxin 12 (Hwtx-2) family. 02 (Hwtx-2) subfamily. As to expression, expressed by the venom gland.

It is found in the secreted. In terms of biological role, postsynaptic neurotoxin. The sequence is that of U4-theraphotoxin-Hhn1b from Cyriopagopus hainanus (Chinese bird spider).